Here is a 674-residue protein sequence, read N- to C-terminus: Metal-nicotianamine transporter YSL2 (674 aa).

A disordered region spans residues 1-29 (MEAAAPEIERCDAGDVESDHDGAAAAAER). The span at 7–22 (EIERCDAGDVESDHDG) shows a compositional bias: basic and acidic residues. Transmembrane regions (helical) follow at residues 41–61 (GMVAALLIGFVYTVIIMKLAL), 64–84 (GIIPTLNVSAALLAFLALRGW), 118–138 (CAVACYTMGFGGGFGSSLLAL), 162–182 (GVGWMTGFLFAISFVGLLNLL), 224–244 (GFLNCFGISLLWSFFQWFYTG), 283–303 (LVNLSALFGAILSWGIMWPLI), 329–349 (FMCVALIMGDGLYHFIKVTGI), 392–412 (LAYAGYALLSIVAVIAIPIMF), 420–440 (VVVAFVLAPVLGFSNAYGTGL), 452–472 (IALFIFAAWGGRDNGVIAGLV), 506–526 (VGQAIGTAMGCIIAPLTFLLF), 559–579 (SALPKHCLELSAGFFAFSVLI), 604–624 (FLVGANFAIDMCVGSLIVFAW), and 633–653 (ALLVPAVASGFICGDGIWMFP).

Belongs to the YSL (TC 2.A.67.2) family. Expressed in phloem cells of vascular bundles in leaves and leaf sheaths. Expressed at low levels in phloem companion cells in the central cylinder of roots, but not in the epidermal or cortical cells.

It is found in the cell membrane. In terms of biological role, involved in the phloem transport of iron and manganese and their translocation into the grain. Transports iron- and manganese-nicotianamine chelates, but not iron-phytosiderophore. The sequence is that of Metal-nicotianamine transporter YSL2 (YSL2) from Oryza sativa subsp. japonica (Rice).